The sequence spans 257 residues: uncharacterized protein (257 aa).

Serine 127 bears the Phosphoserine mark. Disordered stretches follow at residues 146–174 (HEDP…EDDG) and 210–231 (AREK…RREK). The span at 151–160 (PSSTYNSSIS) shows a compositional bias: polar residues. A coiled-coil region spans residues 196 to 257 (HVRMVREVHE…QQQQEDEQKT (62 aa)).

This is an uncharacterized protein from Arabidopsis thaliana (Mouse-ear cress).